Consider the following 300-residue polypeptide: MDYLLNYADQYALDSIYNAVYPLARDNIVRQSISLFFLTWFGGMFLYLTFASLSYQFVFDKSLMDHPKFLKNQVFMEVLTALQNLPGMALLTVPWFLAELHGYSYLYDNISDYGLKYFLCSLPLFVMFSDFGIYWAHRFLHHRYVYPRLHKLHHKWIICTPYASHAFKSADGFLQSLPYHLFPFFFPLHKLTYLALFTFVNFWSIMIHDGKYISNNPIINGAAHHNGHHIYFNYNYGQFTTLFDRLGNSFRAPDEAWFDKDLRQNEDVLRVELMEYEAIRNEVEGDDDREYIANSAKKNH.

The next 3 membrane-spanning stretches (helical) occupy residues 33 to 53 (ISLFFLTWFGGMFLYLTFASL), 78 to 98 (VLTALQNLPGMALLTVPWFLA), and 117 to 137 (YFLCSLPLFVMFSDFGIYWAH). The region spanning 123–248 (PLFVMFSDFG…FTTLFDRLGN (126 aa)) is the Fatty acid hydroxylase domain. Positions 137-141 (HRFLH) match the Histidine box-1 motif. Residues 150–154 (HKLHH) carry the Histidine box-2 motif. Residues 180 to 200 (HLFPFFFPLHKLTYLALFTFV) form a helical membrane-spanning segment. The short motif at 225–229 (HNGHH) is the Histidine box-3 element.

The protein belongs to the sterol desaturase family. It depends on Fe cation as a cofactor.

It is found in the endoplasmic reticulum membrane. It carries out the reaction episterol + 2 Fe(II)-[cytochrome b5] + O2 + 2 H(+) = 5-dehydroepisterol + 2 Fe(III)-[cytochrome b5] + 2 H2O. Its pathway is steroid metabolism; ergosterol biosynthesis. In terms of biological role, C-5 sterol desaturase; part of the third module of ergosterol biosynthesis pathway that includes by the late steps of the pathway. Erg31 and erg32 catalyze the introduction of a C-5 double bond in the B ring to produce 5-dehydroepisterol. The third module or late pathway involves the ergosterol synthesis itself through consecutive reactions that mainly occur in the endoplasmic reticulum (ER) membrane. Firstly, the squalene synthase erg9 catalyzes the condensation of 2 farnesyl pyrophosphate moieties to form squalene, which is the precursor of all steroids. Secondly, squalene is converted into lanosterol by the consecutive action of the squalene epoxidase erg1 and the lanosterol synthase erg7. The lanosterol 14-alpha-demethylase erg11/cyp1 catalyzes C14-demethylation of lanosterol to produce 4,4'-dimethyl cholesta-8,14,24-triene-3-beta-ol. In the next steps, a complex process involving various demethylation, reduction and desaturation reactions catalyzed by the C-14 reductase erg24 and the C-4 demethylation complex erg25-erg26-erg27 leads to the production of zymosterol. Erg28 likely functions in the C-4 demethylation complex reaction by tethering erg26 and Erg27 to the endoplasmic reticulum or to facilitate interaction between these proteins. Then, the sterol 24-C-methyltransferase erg6 catalyzes the methyl transfer from S-adenosyl-methionine to the C-24 of zymosterol to form fecosterol. The C-8 sterol isomerase erg2 catalyzes the reaction which results in unsaturation at C-7 in the B ring of sterols and thus converts fecosterol to episterol. The sterol-C5-desaturases erg31 and erg32 then catalyze the introduction of a C-5 double bond in the B ring to produce 5-dehydroepisterol. The C-22 sterol desaturase erg5 further converts 5-dehydroepisterol into ergosta-5,7,22,24(28)-tetraen-3beta-ol by forming the C-22(23) double bond in the sterol side chain. Finally, ergosta-5,7,22,24(28)-tetraen-3beta-ol is substrate of the C-24(28) sterol reductase erg4 to produce ergosterol. In the genus Schizosaccharomyces, a second route exists between lanosterol and fecosterol, via the methylation of lanosterol to eburicol by erg6, followed by C14-demethylation by erg11/cyp1 and C4-demethylation by the demethylation complex erg25-erg26-erg27. In Schizosaccharomyces pombe (strain 972 / ATCC 24843) (Fission yeast), this protein is Delta(7)-sterol 5(6)-desaturase erg31.